Reading from the N-terminus, the 106-residue chain is NADH dehydrogenase [ubiquinone] iron-sulfur protein 5 (106 aa).

The region spanning Pro30–Lys74 is the CHCH domain. Short sequence motifs (cx9C motif) lie at residues Cys33–Cys43 and Cys56–Cys66. Disulfide bonds link Cys33/Cys66 and Cys43/Cys56. The tract at residues Glu84–Ser106 is disordered.

Belongs to the complex I NDUFS5 subunit family. As to quaternary structure, mammalian complex I is composed of 45 different subunits. This is a component of the iron-sulfur (IP) fragment of the enzyme.

The protein localises to the mitochondrion inner membrane. It localises to the mitochondrion intermembrane space. Functionally, accessory subunit of the mitochondrial membrane respiratory chain NADH dehydrogenase (Complex I), that is believed not to be involved in catalysis. Complex I functions in the transfer of electrons from NADH to the respiratory chain. The immediate electron acceptor for the enzyme is believed to be ubiquinone. This is NADH dehydrogenase [ubiquinone] iron-sulfur protein 5 (NDUFS5) from Bos taurus (Bovine).